The chain runs to 181 residues: ATP-dependent protease subunit HslV (181 aa).

Residue threonine 9 is part of the active site. Na(+) contacts are provided by alanine 166, cysteine 169, and threonine 172.

This sequence belongs to the peptidase T1B family. HslV subfamily. A double ring-shaped homohexamer of HslV is capped on each side by a ring-shaped HslU homohexamer. The assembly of the HslU/HslV complex is dependent on binding of ATP.

The protein resides in the cytoplasm. The catalysed reaction is ATP-dependent cleavage of peptide bonds with broad specificity.. Allosterically activated by HslU binding. Protease subunit of a proteasome-like degradation complex believed to be a general protein degrading machinery. This chain is ATP-dependent protease subunit HslV, found in Staphylococcus aureus (strain bovine RF122 / ET3-1).